Consider the following 447-residue polypeptide: Glycogen synthase (447 aa).

R15 contributes to the ADP-alpha-D-glucose binding site.

This sequence belongs to the glycosyltransferase 1 family. Bacterial/plant glycogen synthase subfamily.

The catalysed reaction is [(1-&gt;4)-alpha-D-glucosyl](n) + ADP-alpha-D-glucose = [(1-&gt;4)-alpha-D-glucosyl](n+1) + ADP + H(+). The protein operates within glycan biosynthesis; glycogen biosynthesis. Synthesizes alpha-1,4-glucan chains using ADP-glucose. In Deinococcus geothermalis (strain DSM 11300 / CIP 105573 / AG-3a), this protein is Glycogen synthase.